The following is a 446-amino-acid chain: C4-dicarboxylate transport protein (446 aa).

9 consecutive transmembrane segments (helical) span residues 25–45, 58–78, 93–113, 159–179, 199–219, 236–256, 322–342, 370–390, and 400–420; these read VQVL…PAIG, LVKM…IASI, FAYF…VANV, ALTE…GLAL, VFFG…FGAM, LLIA…LGAV, IYMT…LSLG, AATL…ILGI, and LTNF…EKGL.

It belongs to the dicarboxylate/amino acid:cation symporter (DAACS) (TC 2.A.23) family.

Its subcellular location is the cell inner membrane. In terms of biological role, responsible for the transport of dicarboxylates such as succinate, fumarate, and malate from the periplasm across the membrane. The protein is C4-dicarboxylate transport protein of Sphingopyxis alaskensis (strain DSM 13593 / LMG 18877 / RB2256) (Sphingomonas alaskensis).